A 684-amino-acid chain; its full sequence is Methionine--tRNA ligase (684 aa).

Residues 17–27 (PYANGKAHVGH) carry the 'HIGH' region motif. Zn(2+) contacts are provided by cysteine 148, cysteine 151, cysteine 160, and cysteine 164. Positions 330 to 334 (TFSKS) match the 'KMSKS' region motif. Residue lysine 333 coordinates ATP. The tRNA-binding domain maps to 582-684 (DFSKLDIRIG…KETNPGTCIH (103 aa)).

It belongs to the class-I aminoacyl-tRNA synthetase family. MetG type 1 subfamily. Homodimer. Zn(2+) is required as a cofactor.

The protein localises to the cytoplasm. It catalyses the reaction tRNA(Met) + L-methionine + ATP = L-methionyl-tRNA(Met) + AMP + diphosphate. Functionally, is required not only for elongation of protein synthesis but also for the initiation of all mRNA translation through initiator tRNA(fMet) aminoacylation. The protein is Methionine--tRNA ligase of Methanococcoides burtonii (strain DSM 6242 / NBRC 107633 / OCM 468 / ACE-M).